The chain runs to 230 residues: MTSYDEEAAINPKAVGNKSSLLKYIIGGGVLAVVGVVAVMVSLQVSGNLVKSEANTLAAQSSGAQRGDRLDLDNDDDLEDEIKEIDDKFKKEFDTLLDNVIQEVNKQLKADLNGGATAGGVNNGGDTDESSNDTDEDSNDSDSKDTDSDSKDTDSDSKDSDSNDTDSDSNGSDSKDTDSDSKDSDSKDTDSDSKDTDSDSKDSDSKDTDSDSKDTDSDSKDSDSNDTDSD.

Asparagine 17, asparagine 132, and asparagine 139 each carry an N-linked (GlcNAc...) asparagine glycan. Residues 112 to 230 form a disordered region; it reads LNGGATAGGV…DSDSNDTDSD (119 aa). A compositionally biased stretch (acidic residues) spans 126–140; that stretch reads DTDESSNDTDEDSND. Positions 141 to 161 are enriched in basic and acidic residues; sequence SDSKDTDSDSKDTDSDSKDSD. Residues asparagine 163 and asparagine 170 are each glycosylated (N-linked (GlcNAc...) asparagine). Basic and acidic residues predominate over residues 173–223; the sequence is DSKDTDSDSKDSDSKDTDSDSKDTDSDSKDSDSKDTDSDSKDTDSDSKDSD. Asparagine 225 carries N-linked (GlcNAc...) asparagine glycosylation.

As to expression, component of the acid-insoluble organic matrix of calcified layers of the shell (at protein level).

Its subcellular location is the secreted. The sequence is that of Aspartate and serine-rich protein from Lottia gigantea (Giant owl limpet).